The following is a 121-amino-acid chain: uncharacterized protein (121 aa).

A compositionally biased stretch (low complexity) spans 12–24 (EEGGASAAAPDAS). Disordered regions lie at residues 12–63 (EEGG…RLEP) and 101–121 (KKLA…SPVV). Residues 26–35 (KSKKGARPCF) show a composition bias toward basic residues. Positions 40 to 49 (QAGSCMTGRQ) are enriched in polar residues. Residues 112 to 121 (GSQKERSPVV) show a composition bias toward basic and acidic residues.

This is an uncharacterized protein from Homo sapiens (Human).